We begin with the raw amino-acid sequence, 962 residues long: UPF0182 protein SACE_1102 (962 aa).

A run of 7 helical transmembrane segments spans residues 10–30 (ILLI…RLLG), 55–75 (LGLG…NLWI), 106–126 (LFGW…AQSD), 168–188 (FVAI…FGGI), 203–223 (IQLS…YFLD), 250–270 (VKLI…AAIF), and 279–299 (IATV…PALL). 2 disordered regions span residues 707–730 (RTFW…GNQQ) and 876–916 (FGPG…EMTK). Residues 899–910 (GQQPPTQQPPAG) show a composition bias toward pro residues.

Belongs to the UPF0182 family.

It localises to the cell membrane. This Saccharopolyspora erythraea (strain ATCC 11635 / DSM 40517 / JCM 4748 / NBRC 13426 / NCIMB 8594 / NRRL 2338) protein is UPF0182 protein SACE_1102.